The chain runs to 273 residues: HMP-PP phosphatase (273 aa).

Catalysis depends on D8, which acts as the Nucleophile. D8, D10, and D212 together coordinate Mg(2+).

This sequence belongs to the HAD-like hydrolase superfamily. Cof family. Mg(2+) serves as cofactor.

It carries out the reaction 4-amino-2-methyl-5-(diphosphooxymethyl)pyrimidine + H2O = 4-amino-2-methyl-5-(phosphooxymethyl)pyrimidine + phosphate + H(+). Functionally, catalyzes the hydrolysis of 4-amino-2-methyl-5-hydroxymethylpyrimidine pyrophosphate (HMP-PP) to 4-amino-2-methyl-5-hydroxymethylpyrimidine phosphate (HMP-P). The chain is HMP-PP phosphatase from Yersinia enterocolitica serotype O:8 / biotype 1B (strain NCTC 13174 / 8081).